We begin with the raw amino-acid sequence, 127 residues long: MORF4 family-associated protein 1-like 1 (127 aa).

Positions 87–118 (GEADERVSELCEKAEEKAKEIAKMAEMLVELV) form a coiled coil.

It belongs to the MORF4 family-associated protein family.

The sequence is that of MORF4 family-associated protein 1-like 1 (MRFAP1L1) from Homo sapiens (Human).